Consider the following 312-residue polypeptide: Malate dehydrogenase (312 aa).

NAD(+) is bound by residues 12-17 (GAGFTG) and Asp-36. Substrate contacts are provided by Arg-87 and Arg-93. NAD(+) contacts are provided by residues Asn-100 and 123–125 (LTN). Asn-125 serves as a coordination point for substrate. Phosphoserine is present on Ser-149. Substrate is bound at residue Arg-156. Residue His-180 is the Proton acceptor of the active site.

It belongs to the LDH/MDH superfamily. MDH type 3 family.

It catalyses the reaction (S)-malate + NAD(+) = oxaloacetate + NADH + H(+). In terms of biological role, catalyzes the reversible oxidation of malate to oxaloacetate. The chain is Malate dehydrogenase from Anoxybacillus flavithermus (strain DSM 21510 / WK1).